Here is a 377-residue protein sequence, read N- to C-terminus: Geranylgeranyl transferase type-1 subunit beta (377 aa).

PFTB repeat units lie at residues 144-186, 193-234, 245-284, and 291-333; these read KEAC…YMLN, MKKA…CLMG, LNRI…KLLK, and FEKN…SLME. Geranylgeranyl diphosphate contacts are provided by residues 219–221 and 263–266; these read HGG and RPNK. Residues Asp-269 and Cys-271 each coordinate Zn(2+). Position 272–275 (272–275) interacts with geranylgeranyl diphosphate; it reads YSFW. Residue His-321 participates in Zn(2+) binding.

This sequence belongs to the protein prenyltransferase subunit beta family. Heterodimer of FNTA and PGGT1B. PGGT1B mediates interaction with substrate peptides. It depends on Zn(2+) as a cofactor. Mg(2+) is required as a cofactor.

The enzyme catalyses geranylgeranyl diphosphate + L-cysteinyl-[protein] = S-geranylgeranyl-L-cysteinyl-[protein] + diphosphate. In terms of biological role, catalyzes the transfer of a geranylgeranyl moiety from geranylgeranyl diphosphate to a cysteine at the fourth position from the C-terminus of proteins with the C-terminal sequence Cys-aliphatic-aliphatic-X. Known substrates include RAC1, RAC2, RAP1A and RAP1B. The sequence is that of Geranylgeranyl transferase type-1 subunit beta (Pggt1b) from Rattus norvegicus (Rat).